Reading from the N-terminus, the 161-residue chain is uncharacterized protein (161 aa).

The chain crosses the membrane as a helical span at residues 30-50; the sequence is GVILFRLLGVILFRLLGVILF.

Its subcellular location is the membrane. This is an uncharacterized protein from Homo sapiens (Human).